The chain runs to 112 residues: MNATILVKIITPLSIALEKQAKMVTMSGEEGMFGVLPSHVPMIVSLKAGLVQVYIDDMHKSENTYLISGGVTEVTANYINIATDTAINVTNLSEAEIATKLLDLQKTLSDQH.

Belongs to the ATPase epsilon chain family. In terms of assembly, F-type ATPases have 2 components, CF(1) - the catalytic core - and CF(0) - the membrane proton channel. CF(1) has five subunits: alpha(3), beta(3), gamma(1), delta(1), epsilon(1). CF(0) has three main subunits: a, b and c.

Its subcellular location is the cell inner membrane. In terms of biological role, produces ATP from ADP in the presence of a proton gradient across the membrane. The protein is ATP synthase epsilon chain of Rickettsia peacockii (strain Rustic).